The following is a 445-amino-acid chain: FAS-associated factor 2 (445 aa).

Ala-2 bears the N-acetylalanine mark. Residues 12–48 form the UBA domain; that stretch reads EQTEKLLQFQDLTGIESMDQCRHTLEQHNWNIEAAVQ. Position 167 is an N6-acetyllysine (Lys-167). A coiled-coil region spans residues 275 to 350; sequence SERLEREERN…EEKERKLECL (76 aa). Residues 299–361 are disordered; the sequence is ASLRADQEKE…PEPSPDDPES (63 aa). Over residues 303–348 the composition is skewed to basic and acidic residues; that stretch reads ADQEKERKKREERERKRRKEEEVQQQKLAEERRRRNLQEEKERKLE. The UBX domain occupies 357–439; sequence DDPESVKIIF…GLSHTEVLFV (83 aa).

In terms of assembly, identified in a complex that contains SEL1L, OS9, FAF2/UBXD8, UBE2J1/UBC6E and AUP1. Interacts with YOD1. Interacts (via N-terminus) with UBQLN2 (via C-terminus). Interacts with PNPLA2 and UBAC2. Interacts with ZFAND2B; probably through VCP. Interacts with LMBR1L.

Its subcellular location is the cytoplasm. The protein localises to the lipid droplet. It is found in the endoplasmic reticulum. Plays an important role in endoplasmic reticulum-associated degradation (ERAD) that mediates ubiquitin-dependent degradation of misfolded endoplasmic reticulum proteins. By controlling the steady-state expression of the IGF1R receptor, indirectly regulates the insulin-like growth factor receptor signaling pathway. Involved in inhibition of lipid droplet degradation by binding to phospholipase PNPL2 and inhibiting its activity by promoting dissociation of PNPL2 from its endogenous activator, ABHD5 which inhibits the rate of triacylglycerol hydrolysis. Involved in stress granule disassembly: associates with ubiquitinated G3BP1 in response to heat shock, thereby promoting interaction between ubiquitinated G3BP1 and VCP, followed by G3BP1 extraction from stress granules and stress granule disassembly. This Bos taurus (Bovine) protein is FAS-associated factor 2 (FAF2).